We begin with the raw amino-acid sequence, 678 residues long: Probable metal-nicotianamine transporter YSL6 (678 aa).

The next 14 helical transmembrane spans lie at 41–61 (VTVR…LITH), 65–85 (LTVG…YFLV), 113–133 (CVVA…MLAM), 158–178 (LGWM…SLVA), 226–246 (ISFF…SCGF), 279–299 (IVNC…WPYI), 324–344 (VFIS…KIIY), 394–414 (LAGS…PMIF), 419–439 (WYLV…NSYG), 467–487 (GGVI…STAA), 512–532 (IGTT…WTAF), 561–581 (SALP…AILI), 606–626 (FYIG…LFVW), and 641–661 (IASG…ILSI).

This sequence belongs to the YSL (TC 2.A.67.2) family. In terms of tissue distribution, expressed in roots and leaves.

Its subcellular location is the membrane. Functionally, may be involved in the transport of nicotianamine-chelated metals. The chain is Probable metal-nicotianamine transporter YSL6 (YSL6) from Oryza sativa subsp. japonica (Rice).